Reading from the N-terminus, the 425-residue chain is Pectate lyase L (425 aa).

Residues 1–25 (MKYLNCFISTGLAAFFLVNSTSVLA) form the signal peptide. Cysteine 28 and cysteine 114 are oxidised to a cystine. Aspartate 209, aspartate 233, aspartate 234, and aspartate 237 together coordinate Ca(2+). The Proton acceptor role is filled by lysine 273. 5 residues coordinate Ca(2+): asparagine 402, serine 413, alanine 416, aspartate 418, and glutamate 423.

The protein belongs to the polysaccharide lyase 9 family. Ca(2+) serves as cofactor.

It is found in the secreted. The catalysed reaction is Eliminative cleavage of (1-&gt;4)-alpha-D-galacturonan to give oligosaccharides with 4-deoxy-alpha-D-galact-4-enuronosyl groups at their non-reducing ends.. The protein operates within glycan metabolism; pectin degradation; 2-dehydro-3-deoxy-D-gluconate from pectin: step 2/5. Its function is as follows. Presents an endo-cleaving activity on polygalacturonate or partially methylated pectin. The chain is Pectate lyase L (pelL) from Dickeya chrysanthemi (Pectobacterium chrysanthemi).